We begin with the raw amino-acid sequence, 205 residues long: Guanylate kinase (205 aa).

The 179-residue stretch at Pro-18–Ile-196 folds into the Guanylate kinase-like domain. ATP is bound at residue Ala-25 to Thr-32.

Belongs to the guanylate kinase family.

The protein resides in the cytoplasm. The enzyme catalyses GMP + ATP = GDP + ADP. In terms of biological role, essential for recycling GMP and indirectly, cGMP. The chain is Guanylate kinase (gmk) from Chlamydia trachomatis serovar D (strain ATCC VR-885 / DSM 19411 / UW-3/Cx).